A 338-amino-acid chain; its full sequence is tRNA N6-adenosine threonylcarbamoyltransferase (338 aa).

Residues His-109 and His-113 each contribute to the Fe cation site. Residues 132–136 (AISGA), Asp-165, Gly-178, and Asn-277 contribute to the substrate site. Asp-302 provides a ligand contact to Fe cation.

Belongs to the KAE1 / TsaD family. Fe(2+) serves as cofactor.

The protein localises to the cytoplasm. It carries out the reaction L-threonylcarbamoyladenylate + adenosine(37) in tRNA = N(6)-L-threonylcarbamoyladenosine(37) in tRNA + AMP + H(+). Its function is as follows. Required for the formation of a threonylcarbamoyl group on adenosine at position 37 (t(6)A37) in tRNAs that read codons beginning with adenine. Is involved in the transfer of the threonylcarbamoyl moiety of threonylcarbamoyl-AMP (TC-AMP) to the N6 group of A37, together with TsaE and TsaB. TsaD likely plays a direct catalytic role in this reaction. The chain is tRNA N6-adenosine threonylcarbamoyltransferase from Chlamydia trachomatis serovar L2b (strain UCH-1/proctitis).